A 180-amino-acid chain; its full sequence is Bifunctional protein PyrR (180 aa).

Positions 101-113 (VILVDDVLYTGRT) match the PRPP-binding motif.

This sequence belongs to the purine/pyrimidine phosphoribosyltransferase family. PyrR subfamily. In terms of assembly, homodimer and homohexamer; in equilibrium.

It catalyses the reaction UMP + diphosphate = 5-phospho-alpha-D-ribose 1-diphosphate + uracil. Functionally, regulates transcriptional attenuation of the pyrimidine nucleotide (pyr) operon by binding in a uridine-dependent manner to specific sites on pyr mRNA. This disrupts an antiterminator hairpin in the RNA and favors formation of a downstream transcription terminator, leading to a reduced expression of downstream genes. Its function is as follows. Also displays a weak uracil phosphoribosyltransferase activity which is not physiologically significant. This chain is Bifunctional protein PyrR, found in Bacillus thuringiensis subsp. konkukian (strain 97-27).